We begin with the raw amino-acid sequence, 318 residues long: Petal death protein (318 aa).

The propeptide at 1–3 (MAP) is removed in mature form. Positions 1–24 (MAPPNGTTNGETEVATQGSYTAVS) are disordered. The Mg(2+) site is built by Asp-107, Asp-109, and Lys-142.

Belongs to the isocitrate lyase/PEP mutase superfamily. In terms of assembly, homodimer and homotetramer formed by a dimer of homodimer. The cofactor is Mg(2+). Mn(2+) serves as cofactor. Fe(2+) is required as a cofactor. It depends on Co(2+) as a cofactor. Accumulates in senescing flower petals.

It catalyses the reaction oxaloacetate + H2O = oxalate + acetate + H(+). Catalyzes cleavage of the C(2)-C(3) bond in oxaloacetate and in (2R)-alkyl malate derivatives to form oxalate and acetate, and alkyl carboxylates and R-ketocarboxylates, respectively. The protein is Petal death protein of Dianthus caryophyllus (Carnation).